The sequence spans 84 residues: uncharacterized protein (84 aa).

The tract at residues 1 to 21 is disordered; it reads MYYRRQGEPQEMYGNGNNSVS. The helical transmembrane segment at 49-69 threads the bilayer; sequence YIIYAIVAAILLLLFWLLYKK.

The protein resides in the membrane. This is an uncharacterized protein from Invertebrate iridescent virus 6 (IIV-6).